Here is a 444-residue protein sequence, read N- to C-terminus: Methylenetetrahydrofolate--tRNA-(uracil-5-)-methyltransferase TrmFO (444 aa).

Position 10–15 (10–15 (GAGLAG)) interacts with FAD.

Belongs to the MnmG family. TrmFO subfamily. Requires FAD as cofactor.

The protein localises to the cytoplasm. It catalyses the reaction uridine(54) in tRNA + (6R)-5,10-methylene-5,6,7,8-tetrahydrofolate + NADH + H(+) = 5-methyluridine(54) in tRNA + (6S)-5,6,7,8-tetrahydrofolate + NAD(+). It carries out the reaction uridine(54) in tRNA + (6R)-5,10-methylene-5,6,7,8-tetrahydrofolate + NADPH + H(+) = 5-methyluridine(54) in tRNA + (6S)-5,6,7,8-tetrahydrofolate + NADP(+). In terms of biological role, catalyzes the folate-dependent formation of 5-methyl-uridine at position 54 (M-5-U54) in all tRNAs. In Streptococcus agalactiae serotype III (strain NEM316), this protein is Methylenetetrahydrofolate--tRNA-(uracil-5-)-methyltransferase TrmFO.